A 433-amino-acid polypeptide reads, in one-letter code: MASTFNIPCNAGTIKNFNNSQRNLGFSSNLGINFAKTRFSNCGDSGRIPSQLVVRASERRDNLTQQKTGLSIEECEAAVVAGNAPSAPPVPPTPKAPSGTPSVSPLSLGRRPRRNRTSPVFRAAFQETTLSPANVVYPLFIHEGEEDTPIGAMPGCYRLGWRHGLVEEVAKARDVVVNSIVVFPKPDALKSPTGDEAYNENGLVPRTIRMLKDKFPDLIIYTDVALDPYYYDGHDGIVTQHGVIMNDETVHQLCKQAVAQARAGADVVSPSDMMDGRVGAIRAALDAEGYSNVSIMSYTAKYASSFYGPFREALDSNPRFGDKKTYQMNPANYREALIETQEDESEGADILLVKPGLPYLDIIRLLRDNSDLPIAAYQVSGEYSMIKAGGVLKMIDEEKVMLESLLCLRRAGADIILTYFALQAARCLCGEKR.

A chloroplast-targeting transit peptide spans 1–56 (MASTFNIPCNAGTIKNFNNSQRNLGFSSNLGINFAKTRFSNCGDSGRIPSQLVVRA). The segment at 83–115 (NAPSAPPVPPTPKAPSGTPSVSPLSLGRRPRRN) is disordered. The span at 86–95 (SAPPVPPTPK) shows a compositional bias: pro residues. Lys301 serves as the catalytic Schiff-base intermediate with substrate. 5-aminolevulinate contacts are provided by Arg311 and Lys323. Residue Glu339 participates in Mg(2+) binding. Lys354 functions as the Schiff-base intermediate with substrate in the catalytic mechanism. 5-aminolevulinate is bound by residues Ser380 and Tyr419.

The protein belongs to the ALAD family. Homooctamer. The cofactor is Mg(2+).

The protein localises to the plastid. The protein resides in the chloroplast. The enzyme catalyses 2 5-aminolevulinate = porphobilinogen + 2 H2O + H(+). It functions in the pathway porphyrin-containing compound metabolism; protoporphyrin-IX biosynthesis; coproporphyrinogen-III from 5-aminolevulinate: step 1/4. Functionally, catalyzes an early step in the biosynthesis of tetrapyrroles. Binds two molecules of 5-aminolevulinate per subunit, each at a distinct site, and catalyzes their condensation to form porphobilinogen. The polypeptide is Delta-aminolevulinic acid dehydratase, chloroplastic (HEMB) (Spinacia oleracea (Spinach)).